We begin with the raw amino-acid sequence, 247 residues long: DASH complex subunit DUO1 (247 aa).

Position 2 is an N-acetylserine (S2). 2 disordered regions span residues 27 to 47 (LNNT…DNIS) and 172 to 247 (NRKG…KMFR). Residues 152–180 (LHNVIALKKKEILDLRQKLENRKGEKDAA) are a coiled coil. The span at 232–247 (NRWTKPTASSSRKMFR) shows a compositional bias: polar residues.

It belongs to the DASH complex DUO1 family. Component of the DASH complex consisting of ASK1, DAD1, DAD2, DAD3, DAD4, DAM1, DUO1, HSK3, SPC19 and SPC34, with a stoichiometry of one copy of each subunit per complex. Multiple DASH complexes oligomerize to form a ring that encircles spindle microtubules and organizes the rod-like NDC80 complexes of the outer kinetochore. DASH complex oligomerization strengthens microtubule attachments. On cytoplasmic microtubules, DASH complexes appear to form patches instead of rings. Within the complex, DAM1 and DUO1 may form the microtubule connections.

The protein resides in the nucleus. It is found in the cytoplasm. It localises to the cytoskeleton. Its subcellular location is the spindle pole. The protein localises to the chromosome. The protein resides in the centromere. It is found in the kinetochore. In terms of biological role, component of the DASH complex that connects microtubules with kinetochores and couples microtubule depolymerisation to chromosome movement; it is involved in retrieving kinetochores to the spindle poles before their re-orientation on the spindle in early mitosis and allows microtubule depolymerization to pull chromosomes apart and resist detachment during anaphase. Kinetochores, consisting of a centromere-associated inner segment and a microtubule-contacting outer segment, play a crucial role in chromosome segregation by mediating the physical connection between centromeric DNA and microtubules. Kinetochores also serve as an input point for the spindle assembly checkpoint, which delays anaphase until all chromosomes have bioriented on the mitotic spindle. During spindle-kinetochore attachment, kinetochores first attach to the lateral surface of spindle microtubules, which supports the congression of chromosomes toward the middle of the dividing cell; they then slide along towards the spindle pole, a process independent of the DASH complex but requiring the NDC80 complex. When the end of a disassembling microtubule reaches the laterally attached kinetochore, the DASH complex together with the NDC80 complex and STU2 convert lateral attachment to end-on capture to produce a structure that can track with microtubule shortening and sustain attachment when tension is applied across sister kinetochores upon their biorientation. Microtubule depolymerization proceeds by protofilament splaying and induces the kinetochore-attached DASH complex to slide longitudinally, thereby helping to transduce depolymerization energy into pulling forces to disjoin chromatids. Incorrect microtubule attachments are corrected by releasing microubules from the kinetochore through phosphorylation by IPL1 of kinetochore components. Links the microtubule cytoskeleton to chromosomes during interphase. Also contributes to the poleward transport of kinetochores on microtubules following centromeric DNA replication in S-phase. This chain is DASH complex subunit DUO1 (DUO1), found in Saccharomyces cerevisiae (strain ATCC 204508 / S288c) (Baker's yeast).